The sequence spans 191 residues: Inosine triphosphate pyrophosphatase (191 aa).

12-17 (TGNKNK) lines the ITP pocket. Glutamate 40 serves as a coordination point for Mg(2+). ITP contacts are provided by residues lysine 52, 68-69 (DS), lysine 85, 144-147 (FGWE), lysine 167, and 172-173 (HR).

This sequence belongs to the HAM1 NTPase family. In terms of assembly, homodimer. Requires Mg(2+) as cofactor. The cofactor is Mn(2+).

It is found in the cytoplasm. The protein resides in the nucleus. It catalyses the reaction ITP + H2O = IMP + diphosphate + H(+). It carries out the reaction dITP + H2O = dIMP + diphosphate + H(+). The enzyme catalyses XTP + H2O = XMP + diphosphate + H(+). Functionally, pyrophosphatase that hydrolyzes non-canonical purine nucleotides such as inosine triphosphate (ITP), deoxyinosine triphosphate (dITP) or xanthosine 5'-triphosphate (XTP) to their respective monophosphate derivatives. The enzyme does not distinguish between the deoxy- and ribose forms. Probably excludes non-canonical purines from RNA and DNA precursor pools, thus preventing their incorporation into RNA and DNA and avoiding chromosomal lesions. This Aspergillus oryzae (strain ATCC 42149 / RIB 40) (Yellow koji mold) protein is Inosine triphosphate pyrophosphatase.